The following is a 261-amino-acid chain: Global transcriptional regulator CodY (261 aa).

Residues 1 to 159 form a GAF domain region; sequence MANLLSKTRR…SSTVVGIQLL (159 aa). The segment at residues 207 to 226 is a DNA-binding region (H-T-H motif); the sequence is ASVIADRIGITRSVIVNALR.

It belongs to the CodY family.

It is found in the cytoplasm. Functionally, DNA-binding global transcriptional regulator which is involved in the adaptive response to starvation and acts by directly or indirectly controlling the expression of numerous genes in response to nutrient availability. During rapid exponential growth, CodY is highly active and represses genes whose products allow adaptation to nutrient depletion. The sequence is that of Global transcriptional regulator CodY from Streptococcus mutans serotype c (strain ATCC 700610 / UA159).